A 65-amino-acid chain; its full sequence is GVRDAYIADDKNCVYTCGSNSYCNTECTKNGAESGYCQWFGRWGNGCWCIKLPDKVPIRIPGKCR.

The 63-residue stretch at R3–R65 folds into the LCN-type CS-alpha/beta domain. Cystine bridges form between C13–C64, C17–C37, C23–C47, and C27–C49. Position 65 is an arginine amide (R65).

This sequence belongs to the long (4 C-C) scorpion toxin superfamily. Sodium channel inhibitor family. Alpha subfamily. In terms of tissue distribution, expressed by the venom gland.

Its subcellular location is the secreted. Functionally, alpha toxins bind voltage-independently at site-3 of sodium channels (Nav) and inhibit the inactivation of the activated channels, thereby blocking neuronal transmission. This toxin inhibits the inactivation of activated TTX-sensitive sodium channels (Nav). The polypeptide is Alpha-toxin Bs-Tx28 (Hottentotta tamulus sindicus (Scorpion)).